A 1342-amino-acid chain; its full sequence is ATP-dependent RNA helicase TDRD9 (1342 aa).

Residues 31–63 (KAEAEDNATEVRSDKAFSELSSPEKEKSDDGNQ) show a composition bias toward basic and acidic residues. The interval 31-81 (KAEAEDNATEVRSDKAFSELSSPEKEKSDDGNQRRKRAQLPTGPGTSPPSL) is disordered. Residues 99–265 (VSLIENNSVV…FGSPIRNQMN (167 aa)) enclose the Helicase ATP-binding domain. Residue 112–119 (GATGSGKT) coordinates ATP. A DEAH box motif is present at residues 211 to 214 (DEVH). A Helicase C-terminal domain is found at 317 to 503 (SLIQSFDEME…LLKVKLLDMG (187 aa)). A Tudor domain is found at 901–962 (SLYPNLLCVA…RELPSDLMTP (62 aa)).

The protein belongs to the DEAD box helicase family. DEAH subfamily.

The protein localises to the cytoplasm. It localises to the nucleus. It carries out the reaction ATP + H2O = ADP + phosphate + H(+). Its function is as follows. ATP-binding RNA helicase which plays a central role during spermatogenesis by repressing transposable elements and preventing their mobilization, which is essential for the germline integrity. Acts via the piRNA metabolic process, which mediates the repression of transposable elements during meiosis by forming complexes composed of piRNAs and Piwi proteins and governs the methylation and subsequent repression of transposons. Acts downstream of piRNA biogenesis: exclusively required for transposon silencing in the nucleus, suggesting that it acts as a nuclear effector in the nucleus together with piwil4. This chain is ATP-dependent RNA helicase TDRD9, found in Danio rerio (Zebrafish).